The following is a 376-amino-acid chain: Bifunctional enzyme IspD/IspF (376 aa).

The tract at residues 1-220 (MRIAAILVAG…RSMSISMIPR (220 aa)) is 2-C-methyl-D-erythritol 4-phosphate cytidylyltransferase. Positions 220–376 (RIGTGYDVHA…QAAVIIMIPA (157 aa)) are 2-C-methyl-D-erythritol 2,4-cyclodiphosphate synthase. Residues D226 and H228 each coordinate a divalent metal cation. Residues 226–228 (DVH) and 252–253 (HS) contribute to the 4-CDP-2-C-methyl-D-erythritol 2-phosphate site. Position 260 (H260) interacts with a divalent metal cation. 4-CDP-2-C-methyl-D-erythritol 2-phosphate contacts are provided by residues 274-276 (DIG), 350-353 (TTSE), F357, and R360.

This sequence in the N-terminal section; belongs to the IspD/TarI cytidylyltransferase family. IspD subfamily. The protein in the C-terminal section; belongs to the IspF family. A divalent metal cation is required as a cofactor.

It catalyses the reaction 2-C-methyl-D-erythritol 4-phosphate + CTP + H(+) = 4-CDP-2-C-methyl-D-erythritol + diphosphate. The enzyme catalyses 4-CDP-2-C-methyl-D-erythritol 2-phosphate = 2-C-methyl-D-erythritol 2,4-cyclic diphosphate + CMP. The protein operates within isoprenoid biosynthesis; isopentenyl diphosphate biosynthesis via DXP pathway; isopentenyl diphosphate from 1-deoxy-D-xylulose 5-phosphate: step 2/6. It participates in isoprenoid biosynthesis; isopentenyl diphosphate biosynthesis via DXP pathway; isopentenyl diphosphate from 1-deoxy-D-xylulose 5-phosphate: step 4/6. Functionally, bifunctional enzyme that catalyzes the formation of 4-diphosphocytidyl-2-C-methyl-D-erythritol from CTP and 2-C-methyl-D-erythritol 4-phosphate (MEP) (IspD), and catalyzes the conversion of 4-diphosphocytidyl-2-C-methyl-D-erythritol 2-phosphate (CDP-ME2P) to 2-C-methyl-D-erythritol 2,4-cyclodiphosphate (ME-CPP) with a corresponding release of cytidine 5-monophosphate (CMP) (IspF). This Granulibacter bethesdensis (strain ATCC BAA-1260 / CGDNIH1) protein is Bifunctional enzyme IspD/IspF.